The primary structure comprises 230 residues: Large ribosomal subunit protein uL1 (230 aa).

It belongs to the universal ribosomal protein uL1 family. Part of the 50S ribosomal subunit.

Functionally, binds directly to 23S rRNA. The L1 stalk is quite mobile in the ribosome, and is involved in E site tRNA release. Protein L1 is also a translational repressor protein, it controls the translation of the L11 operon by binding to its mRNA. The polypeptide is Large ribosomal subunit protein uL1 (Afipia carboxidovorans (strain ATCC 49405 / DSM 1227 / KCTC 32145 / OM5) (Oligotropha carboxidovorans)).